The chain runs to 254 residues: 3-dehydroquinate dehydratase (254 aa).

Residues 47–49 and Arg83 each bind 3-dehydroquinate; that span reads EFR. The active-site Proton donor/acceptor is the His144. The active-site Schiff-base intermediate with substrate is the Lys171. Residues Arg213, Ser232, and Gln236 each coordinate 3-dehydroquinate.

Belongs to the type-I 3-dehydroquinase family. In terms of assembly, homodimer.

It catalyses the reaction 3-dehydroquinate = 3-dehydroshikimate + H2O. Its pathway is metabolic intermediate biosynthesis; chorismate biosynthesis; chorismate from D-erythrose 4-phosphate and phosphoenolpyruvate: step 3/7. Its function is as follows. Involved in the third step of the chorismate pathway, which leads to the biosynthesis of aromatic amino acids. Catalyzes the cis-dehydration of 3-dehydroquinate (DHQ) and introduces the first double bond of the aromatic ring to yield 3-dehydroshikimate. This is 3-dehydroquinate dehydratase from Neisseria meningitidis serogroup B (strain ATCC BAA-335 / MC58).